The sequence spans 1118 residues: Protein SUPPRESSOR OF NPR1-1 CONSTITUTIVE 4 (1118 aa).

The N-terminal stretch at 1–35 is a signal peptide; sequence MNSQQSTRTKQMLQQSSTHLLCGVVLLQLFAAQVD. Topologically, residues 36–751 are extracellular; sequence AQRSTSPWQT…PLRNFLKVIR (716 aa). Residues 51–353 form the GP-PDE 1 domain; sequence PLVIARGGFS…DFPLTASASV (303 aa). N-linked (GlcNAc...) asparagine glycosylation is found at asparagine 106, asparagine 195, asparagine 251, asparagine 260, asparagine 318, asparagine 335, asparagine 362, asparagine 422, asparagine 433, asparagine 497, asparagine 557, asparagine 573, and asparagine 656. One can recognise a GP-PDE 2 domain in the interval 369-670; that stretch reads FLVISKNGAS…EFPYTAARYK (302 aa). The helical transmembrane segment at 752–772 threads the bilayer; sequence IVSWSVAGVVLFLVLLTLVFC. Over 773 to 1118 the chain is Cytoplasmic; the sequence is FHRKRETRLR…SEDVSVYTEG (346 aa). The region spanning 805–1094 is the Protein kinase domain; the sequence is KSFAEVVGRG…ALEVPPRPVL (290 aa). Residues 811-819 and lysine 833 each bind ATP; that span reads VGRGGFGIV. The Proton acceptor role is filled by aspartate 928.

In the N-terminal section; belongs to the glycerophosphoryl diester phosphodiesterase family. It in the C-terminal section; belongs to the protein kinase superfamily. Ser/Thr protein kinase family. In terms of tissue distribution, expressed in shoots, rosette and cauline leaves, stems, flowers and siliques.

It localises to the cell membrane. The catalysed reaction is a sn-glycero-3-phosphodiester + H2O = an alcohol + sn-glycerol 3-phosphate + H(+). It carries out the reaction L-seryl-[protein] + ATP = O-phospho-L-seryl-[protein] + ADP + H(+). It catalyses the reaction L-threonyl-[protein] + ATP = O-phospho-L-threonyl-[protein] + ADP + H(+). Its function is as follows. Atypical receptor-like kinase involved in disease resistance. The sequence is that of Protein SUPPRESSOR OF NPR1-1 CONSTITUTIVE 4 from Arabidopsis thaliana (Mouse-ear cress).